The sequence spans 475 residues: Aspartyl/glutamyl-tRNA(Asn/Gln) amidotransferase subunit B (475 aa).

The protein belongs to the GatB/GatE family. GatB subfamily. As to quaternary structure, heterotrimer of A, B and C subunits.

It carries out the reaction L-glutamyl-tRNA(Gln) + L-glutamine + ATP + H2O = L-glutaminyl-tRNA(Gln) + L-glutamate + ADP + phosphate + H(+). It catalyses the reaction L-aspartyl-tRNA(Asn) + L-glutamine + ATP + H2O = L-asparaginyl-tRNA(Asn) + L-glutamate + ADP + phosphate + 2 H(+). Allows the formation of correctly charged Asn-tRNA(Asn) or Gln-tRNA(Gln) through the transamidation of misacylated Asp-tRNA(Asn) or Glu-tRNA(Gln) in organisms which lack either or both of asparaginyl-tRNA or glutaminyl-tRNA synthetases. The reaction takes place in the presence of glutamine and ATP through an activated phospho-Asp-tRNA(Asn) or phospho-Glu-tRNA(Gln). This chain is Aspartyl/glutamyl-tRNA(Asn/Gln) amidotransferase subunit B, found in Helicobacter pylori (strain HPAG1).